The following is a 439-amino-acid chain: Uracil-regulated protein 1 (439 aa).

Residues 1-24 (MLATEQSRPAECNGAHAHEKTEEV) are disordered. Position 268–272 (268–272 (RVHDE)) interacts with GTP. Positions 273, 284, and 286 each coordinate Zn(2+). 315–317 (EGR) lines the GTP pocket. Asp-353 serves as the catalytic Proton acceptor. The active-site Nucleophile is Arg-355. Residues Ser-377 and Lys-382 each contribute to the GTP site.

It belongs to the GTP cyclohydrolase II family.

It localises to the cytoplasm. The protein localises to the nucleus. The chain is Uracil-regulated protein 1 (urg1) from Schizosaccharomyces pombe (strain 972 / ATCC 24843) (Fission yeast).